A 225-amino-acid polypeptide reads, in one-letter code: Protein-L-isoaspartate O-methyltransferase (225 aa).

Residue S75 is part of the active site.

Belongs to the methyltransferase superfamily. L-isoaspartyl/D-aspartyl protein methyltransferase family.

It is found in the cytoplasm. It carries out the reaction [protein]-L-isoaspartate + S-adenosyl-L-methionine = [protein]-L-isoaspartate alpha-methyl ester + S-adenosyl-L-homocysteine. Functionally, catalyzes the methyl esterification of L-isoaspartyl residues in peptides and proteins that result from spontaneous decomposition of normal L-aspartyl and L-asparaginyl residues. It plays a role in the repair and/or degradation of damaged proteins. The sequence is that of Protein-L-isoaspartate O-methyltransferase from Xanthomonas euvesicatoria pv. vesicatoria (strain 85-10) (Xanthomonas campestris pv. vesicatoria).